The following is a 379-amino-acid chain: Transcription termination factor 1b, mitochondrial (379 aa).

Residues M1–T37 constitute a mitochondrion transit peptide. Interaction with DNA regions lie at residues R151–S152, Q229–R233, S306–K313, S337–T340, and S366–K373.

It belongs to the mTERF family. Monomer. Post-translationally, phosphoprotein with mostly four phosphate groups. While the DNA-binding activity is unaffected by the phosphorylation state, only the phosphorylated form of the protein is active for termination activity. Functioning seems to be regulated by phosphorylation. In terms of tissue distribution, expressed strongly in the heart and at lower levels in brain, liver and kidney.

It is found in the mitochondrion. In terms of biological role, transcription termination factor. Binds to a 28 bp region within the tRNA(Leu(uur)) gene at a position immediately adjacent to and downstream of the 16S rRNA gene; this region comprises a tridecamer sequence critical for directing accurate termination. Binds DNA along the major grove and promotes DNA bending and partial unwinding. Promotes base flipping. Transcription termination activity appears to be polarized with highest specificity for transcripts initiated on the light strand. The sequence is that of Transcription termination factor 1b, mitochondrial from Mus musculus (Mouse).